The chain runs to 716 residues: ATP-dependent DNA helicase DinG (716 aa).

Positions 17 to 294 constitute a Helicase ATP-binding domain; the sequence is ALQEQIPDFI…TCMEQFRPKT (278 aa). 54 to 61 provides a ligand contact to ATP; that stretch reads APTGVGKT. C120 provides a ligand contact to [4Fe-4S] cluster. The DEAH box motif lies at 131 to 134; it reads EPTQ. [4Fe-4S] cluster is bound by residues C194, C199, and C205. The DEAH box signature appears at 248-251; the sequence is DEGH. One can recognise a Helicase C-terminal domain in the interval 487 to 698; the sequence is ALDSPFNHCE…VFPIEQPEVP (212 aa).

This sequence belongs to the helicase family. DinG subfamily. Type 1 sub-subfamily. [4Fe-4S] cluster is required as a cofactor.

The catalysed reaction is Couples ATP hydrolysis with the unwinding of duplex DNA at the replication fork by translocating in the 5'-3' direction. This creates two antiparallel DNA single strands (ssDNA). The leading ssDNA polymer is the template for DNA polymerase III holoenzyme which synthesizes a continuous strand.. It catalyses the reaction ATP + H2O = ADP + phosphate + H(+). Its function is as follows. DNA-dependent ATPase and 5'-3' DNA helicase. Unwinds D-loops, R-loops, forked DNA and G-quadruplex DNA. In Shigella flexneri, this protein is ATP-dependent DNA helicase DinG.